A 287-amino-acid polypeptide reads, in one-letter code: tRNA pseudouridine synthase B (287 aa).

Asp37 functions as the Nucleophile in the catalytic mechanism.

It belongs to the pseudouridine synthase TruB family. Type 1 subfamily.

The catalysed reaction is uridine(55) in tRNA = pseudouridine(55) in tRNA. Its function is as follows. Responsible for synthesis of pseudouridine from uracil-55 in the psi GC loop of transfer RNAs. The polypeptide is tRNA pseudouridine synthase B (Caldicellulosiruptor saccharolyticus (strain ATCC 43494 / DSM 8903 / Tp8T 6331)).